Reading from the N-terminus, the 205-residue chain is uncharacterized protein (205 aa).

Helical transmembrane passes span 18-38 (ATVN…GTIG), 69-89 (LGIF…CFYA), 106-126 (VVWI…YYIM), and 127-147 (LLHP…LFLI).

The protein resides in the mitochondrion membrane. This is an uncharacterized protein from Arabidopsis thaliana (Mouse-ear cress).